The chain runs to 62 residues: Bacteriocin piscicolin-126 (62 aa).

Positions 1-18 (MKTVKELSVKEMQLTTGG) are excised as a propeptide. Cysteines 27 and 32 form a disulfide.

It localises to the secreted. Inhibits the growth of several Gram-positive bacteria, especially the food-borne pathogen L.monocytogenes, but has no effect on the growth of a number of yeasts and Gram-negative bacteria. This Carnobacterium maltaromaticum (Carnobacterium piscicola) protein is Bacteriocin piscicolin-126 (pisA).